The following is a 252-amino-acid chain: tRNA pseudouridine synthase A (252 aa).

Catalysis depends on Asp51, which acts as the Nucleophile. Substrate is bound at residue Tyr105.

It belongs to the tRNA pseudouridine synthase TruA family.

The catalysed reaction is uridine(38/39/40) in tRNA = pseudouridine(38/39/40) in tRNA. In terms of biological role, formation of pseudouridine at positions 38, 39 and 40 in the anticodon stem and loop of transfer RNAs. The polypeptide is tRNA pseudouridine synthase A (Thermoplasma acidophilum (strain ATCC 25905 / DSM 1728 / JCM 9062 / NBRC 15155 / AMRC-C165)).